Reading from the N-terminus, the 156-residue chain is NAD(P)H-quinone oxidoreductase subunit N (156 aa).

This sequence belongs to the complex I NdhN subunit family. In terms of assembly, NDH-1 can be composed of about 15 different subunits; different subcomplexes with different compositions have been identified which probably have different functions.

The protein localises to the cellular thylakoid membrane. It catalyses the reaction a plastoquinone + NADH + (n+1) H(+)(in) = a plastoquinol + NAD(+) + n H(+)(out). The catalysed reaction is a plastoquinone + NADPH + (n+1) H(+)(in) = a plastoquinol + NADP(+) + n H(+)(out). In terms of biological role, NDH-1 shuttles electrons from an unknown electron donor, via FMN and iron-sulfur (Fe-S) centers, to quinones in the respiratory and/or the photosynthetic chain. The immediate electron acceptor for the enzyme in this species is believed to be plastoquinone. Couples the redox reaction to proton translocation, and thus conserves the redox energy in a proton gradient. Cyanobacterial NDH-1 also plays a role in inorganic carbon-concentration. This chain is NAD(P)H-quinone oxidoreductase subunit N, found in Prochlorococcus marinus (strain MIT 9515).